A 367-amino-acid polypeptide reads, in one-letter code: Chorismate synthase (367 aa).

Arginine 48 contributes to the NADP(+) binding site. FMN-binding positions include 125–127 (RSS), 241–242 (NA), glycine 285, 300–304 (KPTSS), and arginine 326.

It belongs to the chorismate synthase family. Homotetramer. FMNH2 serves as cofactor.

It catalyses the reaction 5-O-(1-carboxyvinyl)-3-phosphoshikimate = chorismate + phosphate. The protein operates within metabolic intermediate biosynthesis; chorismate biosynthesis; chorismate from D-erythrose 4-phosphate and phosphoenolpyruvate: step 7/7. In terms of biological role, catalyzes the anti-1,4-elimination of the C-3 phosphate and the C-6 proR hydrogen from 5-enolpyruvylshikimate-3-phosphate (EPSP) to yield chorismate, which is the branch point compound that serves as the starting substrate for the three terminal pathways of aromatic amino acid biosynthesis. This reaction introduces a second double bond into the aromatic ring system. This is Chorismate synthase from Dinoroseobacter shibae (strain DSM 16493 / NCIMB 14021 / DFL 12).